The sequence spans 354 residues: Ornithine transcarbamylase, mitochondrial (354 aa).

A mitochondrion-targeting transit peptide spans 1 to 32 (MLSNLRILLNKAALRKAHTSMVRNFRYGKPVQ). Lys70 is modified (N6-acetyllysine; alternate). Lys70 bears the N6-succinyllysine; alternate mark. Residue Lys80 is modified to N6-succinyllysine. At Lys88 the chain carries N6-acetyllysine; alternate. The residue at position 88 (Lys88) is an N6-succinyllysine; alternate. Residue 90–93 (STRT) coordinates carbamoyl phosphate. Ser133 carries the post-translational modification Phosphoserine. Arg141 is a carbamoyl phosphate binding site. Lys144 bears the N6-acetyllysine; alternate mark. At Lys144 the chain carries N6-succinyllysine; alternate. The carbamoyl phosphate site is built by His168 and Gln171. Asn199 contacts L-ornithine. N6-acetyllysine; alternate is present on residues Lys221, Lys231, and Lys238. N6-succinyllysine; alternate is present on residues Lys221, Lys231, and Lys238. Asp263, Ser267, and Met268 together coordinate L-ornithine. N6-succinyllysine occurs at positions 274 and 289. Residue Lys292 is modified to N6-acetyllysine; alternate. Lys292 carries the post-translational modification N6-succinyllysine; alternate. Residue Cys303 is the Proton acceptor of the active site. 303 to 304 (CL) is a carbamoyl phosphate binding site. Lys307 is modified (N6-acetyllysine; alternate). Lys307 carries the N6-succinyllysine; alternate modification. Arg330 serves as a coordination point for carbamoyl phosphate.

Belongs to the aspartate/ornithine carbamoyltransferase superfamily. OTCase family. In terms of assembly, homotrimer. Post-translationally, acetylation at Lys-88 negatively regulates ornithine carbamoyltransferase activity in response to nutrient signals.

Its subcellular location is the mitochondrion matrix. It carries out the reaction carbamoyl phosphate + L-ornithine = L-citrulline + phosphate + H(+). It participates in nitrogen metabolism; urea cycle; L-citrulline from L-ornithine and carbamoyl phosphate: step 1/1. With respect to regulation, negatively regulated by lysine acetylation. Functionally, catalyzes the second step of the urea cycle, the condensation of carbamoyl phosphate with L-ornithine to form L-citrulline. The urea cycle ensures the detoxification of ammonia by converting it to urea for excretion. This is Ornithine transcarbamylase, mitochondrial from Rattus norvegicus (Rat).